A 153-amino-acid polypeptide reads, in one-letter code: Large ribosomal subunit protein uL29 (153 aa).

Residues 1 to 83 are large ribosomal subunit protein uL29; sequence MNKELRAKTN…KEQTKQKEIQ (83 aa). The interval 84 to 153 is unknown; sequence ESVKKIKQLR…NVKAKTKKKG (70 aa). The span at 100 to 121 shows a compositional bias: basic and acidic residues; that stretch reads NKEKRLANAEKVKAAPKPEQKT. The segment at 100–153 is disordered; that stretch reads NKEKRLANAEKVKAAPKPEQKTKKVKKAPKKTETVKPTTNKNKKNVKAKTKKKG. A compositionally biased stretch (basic residues) spans 140–153; it reads KNKKNVKAKTKKKG.

This sequence belongs to the universal ribosomal protein uL29 family.

The chain is Large ribosomal subunit protein uL29 from Mycoplasmoides gallisepticum (strain R(low / passage 15 / clone 2)) (Mycoplasma gallisepticum).